Consider the following 65-residue polypeptide: Weak neurotoxin 6 (65 aa).

5 cysteine pairs are disulfide-bonded: Cys-3-Cys-24, Cys-6-Cys-11, Cys-17-Cys-42, Cys-46-Cys-57, and Cys-58-Cys-63.

The protein belongs to the three-finger toxin family. Ancestral subfamily. Orphan group II sub-subfamily. As to expression, expressed by the venom gland.

The protein localises to the secreted. In terms of biological role, binds with low affinity to muscular (alpha-1-beta-1-delta-epsilon/CHRNA1-CHRNB1-CHRND-CHRNE) and very low affinity to neuronal (alpha-7/CHRNA7) nicotinic acetylcholine receptor (nAChR). This chain is Weak neurotoxin 6, found in Naja naja (Indian cobra).